Consider the following 477-residue polypeptide: Aspartyl/glutamyl-tRNA(Asn/Gln) amidotransferase subunit B (477 aa).

This sequence belongs to the GatB/GatE family. GatB subfamily. As to quaternary structure, heterotrimer of A, B and C subunits.

The enzyme catalyses L-glutamyl-tRNA(Gln) + L-glutamine + ATP + H2O = L-glutaminyl-tRNA(Gln) + L-glutamate + ADP + phosphate + H(+). It catalyses the reaction L-aspartyl-tRNA(Asn) + L-glutamine + ATP + H2O = L-asparaginyl-tRNA(Asn) + L-glutamate + ADP + phosphate + 2 H(+). Its function is as follows. Allows the formation of correctly charged Asn-tRNA(Asn) or Gln-tRNA(Gln) through the transamidation of misacylated Asp-tRNA(Asn) or Glu-tRNA(Gln) in organisms which lack either or both of asparaginyl-tRNA or glutaminyl-tRNA synthetases. The reaction takes place in the presence of glutamine and ATP through an activated phospho-Asp-tRNA(Asn) or phospho-Glu-tRNA(Gln). The sequence is that of Aspartyl/glutamyl-tRNA(Asn/Gln) amidotransferase subunit B from Sulfurovum sp. (strain NBC37-1).